Reading from the N-terminus, the 611-residue chain is MAAGRVFAFRDARWAPDPVLAPSAAVRSPQPVPLVIDNGSFQTRAGWAAADPSVPAEPLLRFRSLAARSRGARGGAGAETQVGNDLGSPEPLRWLLRSPFDRNVPVQLELQELLFDHVFQRLGVASQGCVDHPIVLTEAVCNPLYSRQMMSELLFECYQVPKVSYGVDSLYSFYHNRRQNWPCSGLVISSGYQCTHILPVLEGRLDAKNCKRINLGGCQAAVYLQRLLQLKYPGHFAAITLSRMEEILHEHSYIAEDYTEELQKWRSPEYYENNVHKMQLPFSNKLLGSTLTSEEKQERRQQQLRRLQELNARRREEKLQLDQERLDRLLYVQELLEDGQMDQFHKALVELNMDSAEELQSYINKLSLAIEQTKQKILQAEVNIEVDIVDSKPETPDLDPLSSEQSLEDVESINEFEPLFAEEQPEAEKPVAAVQPVFNLAEYHQLFLGTERIRAPEIIFQPSLIGEDQTGIAETMQYVLERYSKEQQALLVQNVFLTGGNAMYPGLKARVQKELLEMRPFQSSFQVHLASSPTLDAWYGARDWAVEHMTREEGWITRKDYEEKGGEYLKEHCASNVYVPIRLPKQAPRTTEALAPSRALAAGTGNPCEQA.

2 coiled-coil regions span residues 290-329 and 355-386; these read TLTS…LDRL and SAEE…NIEV.

This sequence belongs to the actin family. ARP5 subfamily. Component of the chromatin remodeling INO80 complex.

It is found in the nucleus. Proposed core component of the chromatin remodeling INO80 complex which is involved in transcriptional regulation, DNA replication and probably DNA repair. This is Actin-related protein 5 (ACTR5) from Gallus gallus (Chicken).